Consider the following 328-residue polypeptide: Phosphate acyltransferase (328 aa).

The protein belongs to the PlsX family. In terms of assembly, homodimer. Probably interacts with PlsY.

The protein resides in the cytoplasm. It carries out the reaction a fatty acyl-[ACP] + phosphate = an acyl phosphate + holo-[ACP]. It functions in the pathway lipid metabolism; phospholipid metabolism. Its function is as follows. Catalyzes the reversible formation of acyl-phosphate (acyl-PO(4)) from acyl-[acyl-carrier-protein] (acyl-ACP). This enzyme utilizes acyl-ACP as fatty acyl donor, but not acyl-CoA. The chain is Phosphate acyltransferase from Geobacillus thermodenitrificans (strain NG80-2).